Reading from the N-terminus, the 561-residue chain is Zinc finger protein 394 (561 aa).

Positions 1–61 (MNSSLTAQRR…NYPAASPDPE (61 aa)) are disordered. Residue Ser12 is modified to Phosphoserine. Lys40 participates in a covalent cross-link: Glycyl lysine isopeptide (Lys-Gly) (interchain with G-Cter in SUMO2). One can recognise an SCAN box domain in the interval 64–146 (RLHFRQLRYQ…AVVRALQRAL (83 aa)). A KRAB domain is found at 155–230 (VTFEDTAVSL…LQEAFQGKRP (76 aa)). Positions 182 to 201 (ESAQKDSGSTVPPSLESRVE) are disordered. Residues Lys203 and Lys228 each participate in a glycyl lysine isopeptide (Lys-Gly) (interchain with G-Cter in SUMO2) cross-link. The segment at 231 to 285 (LFSKCGSTHEDRVEKQSGDPLPLKLENSPEAEGLNSISDVNKNGSIEGEDSKNNE) is disordered. Residues 237–247 (STHEDRVEKQS) are compositionally biased toward basic and acidic residues. Residue Lys254 forms a Glycyl lysine isopeptide (Lys-Gly) (interchain with G-Cter in SUMO2) linkage. The span at 265–274 (NSISDVNKNG) shows a compositional bias: polar residues. Lys282 is covalently cross-linked (Glycyl lysine isopeptide (Lys-Gly) (interchain with G-Cter in SUMO2)). 7 consecutive C2H2-type zinc fingers follow at residues 358-380 (YKCG…QRIH), 386-408 (YGCQ…QRTH), 414-436 (YTCL…QSTH), 442-463 (FKCE…QRLH), 469-491 (YKCE…HRIH), 497-519 (YGCS…QRIH), and 525-547 (YKCL…QRIH). Lys443 participates in a covalent cross-link: Glycyl lysine isopeptide (Lys-Gly) (interchain with G-Cter in SUMO2).

This sequence belongs to the krueppel C2H2-type zinc-finger protein family.

It is found in the nucleus. Functionally, may be involved in transcriptional regulation. This Homo sapiens (Human) protein is Zinc finger protein 394 (ZNF394).